Here is a 117-residue protein sequence, read N- to C-terminus: Large ribosomal subunit protein bL20c (117 aa).

The protein belongs to the bacterial ribosomal protein bL20 family.

It localises to the plastid. Its subcellular location is the chloroplast. Its function is as follows. Binds directly to 23S ribosomal RNA and is necessary for the in vitro assembly process of the 50S ribosomal subunit. It is not involved in the protein synthesizing functions of that subunit. The chain is Large ribosomal subunit protein bL20c from Eucalyptus globulus subsp. globulus (Tasmanian blue gum).